The following is a 161-amino-acid chain: uncharacterized protein (161 aa).

This is an uncharacterized protein from Haemophilus influenzae (strain ATCC 51907 / DSM 11121 / KW20 / Rd).